We begin with the raw amino-acid sequence, 172 residues long: Adenine phosphoribosyltransferase (172 aa).

Belongs to the purine/pyrimidine phosphoribosyltransferase family. Homodimer.

Its subcellular location is the cytoplasm. It catalyses the reaction AMP + diphosphate = 5-phospho-alpha-D-ribose 1-diphosphate + adenine. It functions in the pathway purine metabolism; AMP biosynthesis via salvage pathway; AMP from adenine: step 1/1. In terms of biological role, catalyzes a salvage reaction resulting in the formation of AMP, that is energically less costly than de novo synthesis. The sequence is that of Adenine phosphoribosyltransferase from Staphylococcus aureus (strain Mu3 / ATCC 700698).